A 222-amino-acid polypeptide reads, in one-letter code: Probable nicotinate-nucleotide adenylyltransferase (222 aa).

It belongs to the NadD family.

The catalysed reaction is nicotinate beta-D-ribonucleotide + ATP + H(+) = deamido-NAD(+) + diphosphate. It participates in cofactor biosynthesis; NAD(+) biosynthesis; deamido-NAD(+) from nicotinate D-ribonucleotide: step 1/1. In terms of biological role, catalyzes the reversible adenylation of nicotinate mononucleotide (NaMN) to nicotinic acid adenine dinucleotide (NaAD). In Xylella fastidiosa (strain M23), this protein is Probable nicotinate-nucleotide adenylyltransferase.